Here is a 457-residue protein sequence, read N- to C-terminus: Putative adhesion G protein-coupled receptor E4P (457 aa).

A signal peptide spans 1–14 (MGSRFLLVLLSGAS). Intrachain disulfides connect C15-C24, C18-C30, C32-C52, C58-C71, C65-C80, and C82-C103. The 39-residue stretch at 15–53 (CPPCPKYASCHNSTHCTCEDGFRARSGRTYFHDSSEKCE) folds into the EGF-like 1 domain. Over 16–191 (PPCPKYASCH…LAPKEDPVLT (176 aa)) the chain is Extracellular. N-linked (GlcNAc...) asparagine glycosylation is present at N26. The 51-residue stretch at 54 to 104 (DINECETGLAKCKYKAYCRNKVGGYICSCLVKYTLFNFLAGIIDYDHPDCY) folds into the EGF-like 2; calcium-binding domain. N106 and N162 each carry an N-linked (GlcNAc...) asparagine glycan. The region spanning 134–186 (DKRTKHICVYWEGSEGGWSTEGCSHVHSNGSYTKCKCFHLSSFAVLVALAPKE) is the GAIN-B domain. 2 cysteine pairs are disulfide-bonded: C141–C168 and C156–C170. Residues 141–186 (CVYWEGSEGGWSTEGCSHVHSNGSYTKCKCFHLSSFAVLVALAPKE) form a GPS region. The helical transmembrane segment at 192–212 (VITQVGLTISLLCLFLAILTF) threads the bilayer. The Cytoplasmic portion of the chain corresponds to 213 to 223 (LLCRPIQNTST). A helical membrane pass occupies residues 224 to 244 (SLHLELSLCLFLAHLLFLTGI). Residue N245 is glycosylated (N-linked (GlcNAc...) asparagine). Over 245 to 250 (NRTEPE) the chain is Extracellular. The helical transmembrane segment at 251-271 (VLCSIIAGLLHFLYLACFTWM) threads the bilayer. Over 272 to 299 (LLEGLHLFLTVRNLKVANYTSTGRFKKR) the chain is Cytoplasmic. A helical membrane pass occupies residues 300–320 (FMYPVGYGIPAVIIAVSAIVG). At 321–336 (PQNYGTFTCWLKLDKG) the chain is on the extracellular side. The chain crosses the membrane as a helical span at residues 337-357 (FIWSFMGPVAVIILINLVFYF). The Cytoplasmic segment spans residues 358 to 384 (QVLWILRSKLSSLNKEVSTIQDTRVMT). The helical transmembrane segment at 385–405 (FKAISQLFILGCSWGLGFFMV) threads the bilayer. The Extracellular portion of the chain corresponds to 406 to 413 (EEVGKTIG). A helical transmembrane segment spans residues 414-434 (SIIAYSFTIINTLQGVLLFVV). The Cytoplasmic portion of the chain corresponds to 435–457 (HCLLNRQVRLIILSVISLVPKSN).

Belongs to the G-protein coupled receptor 2 family. Adhesion G-protein coupled receptor (ADGR) subfamily. As to quaternary structure, forms a heterodimer, consisting of a large extracellular region (alpha subunit) non-covalently linked to a seven-transmembrane moiety (beta subunit). Post-translationally, glycosylated. Proteolytically cleaved into 2 subunits, an extracellular alpha subunit and a seven-transmembrane subunit.

The protein resides in the cell membrane. It is found in the secreted. Functionally, may mediate the cellular interaction between myeloid cells and B-cells. This is Putative adhesion G protein-coupled receptor E4P from Homo sapiens (Human).